A 379-amino-acid chain; its full sequence is Elongation factor Ts, mitochondrial (379 aa).

The N-terminal 33 residues, 1-33, are a transit peptide targeting the mitochondrion; the sequence is MAWGQGAKRSILGLLFRSQHQTARAYSSSAFQT.

It belongs to the EF-Ts family.

The protein localises to the mitochondrion. Its function is as follows. Associates with the EF-Tu.GDP complex and induces the exchange of GDP to GTP. It remains bound to the aminoacyl-tRNA.EF-Tu.GTP complex up to the GTP hydrolysis stage on the ribosome. The sequence is that of Elongation factor Ts, mitochondrial from Zea mays (Maize).